Here is a 104-residue protein sequence, read N- to C-terminus: L-rhamnose mutarotase (104 aa).

Y18 lines the substrate pocket. The active-site Proton donor is H22. Residues Y41 and 76 to 77 (WW) each bind substrate.

The protein belongs to the rhamnose mutarotase family. In terms of assembly, homodimer.

The protein localises to the cytoplasm. It catalyses the reaction alpha-L-rhamnose = beta-L-rhamnose. It participates in carbohydrate metabolism; L-rhamnose metabolism. Involved in the anomeric conversion of L-rhamnose. The protein is L-rhamnose mutarotase of Phocaeicola vulgatus (strain ATCC 8482 / DSM 1447 / JCM 5826 / CCUG 4940 / NBRC 14291 / NCTC 11154) (Bacteroides vulgatus).